The chain runs to 371 residues: Bifunctional enzyme IspD/IspF (371 aa).

Residues 1-210 (MSEISLIMLA…LDLPTPSFEI (210 aa)) are 2-C-methyl-D-erythritol 4-phosphate cytidylyltransferase. The segment at 211-371 (FTGNGFDVHE…NLKYFDWTRL (161 aa)) is 2-C-methyl-D-erythritol 2,4-cyclodiphosphate synthase. Positions 217 and 219 each coordinate a divalent metal cation. 4-CDP-2-C-methyl-D-erythritol 2-phosphate is bound by residues 217–219 (DVH) and 243–244 (HS). An a divalent metal cation-binding site is contributed by His-251. 4-CDP-2-C-methyl-D-erythritol 2-phosphate is bound by residues 265–267 (DIG), 270–274 (YPDTD), 341–344 (TTTE), Phe-348, and Arg-351.

This sequence in the N-terminal section; belongs to the IspD/TarI cytidylyltransferase family. IspD subfamily. In the C-terminal section; belongs to the IspF family. Requires a divalent metal cation as cofactor.

The enzyme catalyses 2-C-methyl-D-erythritol 4-phosphate + CTP + H(+) = 4-CDP-2-C-methyl-D-erythritol + diphosphate. The catalysed reaction is 4-CDP-2-C-methyl-D-erythritol 2-phosphate = 2-C-methyl-D-erythritol 2,4-cyclic diphosphate + CMP. The protein operates within isoprenoid biosynthesis; isopentenyl diphosphate biosynthesis via DXP pathway; isopentenyl diphosphate from 1-deoxy-D-xylulose 5-phosphate: step 2/6. Its pathway is isoprenoid biosynthesis; isopentenyl diphosphate biosynthesis via DXP pathway; isopentenyl diphosphate from 1-deoxy-D-xylulose 5-phosphate: step 4/6. Functionally, bifunctional enzyme that catalyzes the formation of 4-diphosphocytidyl-2-C-methyl-D-erythritol from CTP and 2-C-methyl-D-erythritol 4-phosphate (MEP) (IspD), and catalyzes the conversion of 4-diphosphocytidyl-2-C-methyl-D-erythritol 2-phosphate (CDP-ME2P) to 2-C-methyl-D-erythritol 2,4-cyclodiphosphate (ME-CPP) with a corresponding release of cytidine 5-monophosphate (CMP) (IspF). This Campylobacter jejuni subsp. jejuni serotype O:23/36 (strain 81-176) protein is Bifunctional enzyme IspD/IspF.